A 295-amino-acid chain; its full sequence is Aspartate carbamoyltransferase catalytic subunit (295 aa).

The carbamoyl phosphate site is built by Arg-49 and Thr-50. An L-aspartate-binding site is contributed by Lys-77. Arg-99, His-127, and Gln-130 together coordinate carbamoyl phosphate. Arg-161 and Arg-212 together coordinate L-aspartate. The carbamoyl phosphate site is built by Gly-251 and Pro-252.

It belongs to the aspartate/ornithine carbamoyltransferase superfamily. ATCase family. As to quaternary structure, heterododecamer (2C3:3R2) of six catalytic PyrB chains organized as two trimers (C3), and six regulatory PyrI chains organized as three dimers (R2).

It catalyses the reaction carbamoyl phosphate + L-aspartate = N-carbamoyl-L-aspartate + phosphate + H(+). The protein operates within pyrimidine metabolism; UMP biosynthesis via de novo pathway; (S)-dihydroorotate from bicarbonate: step 2/3. Functionally, catalyzes the condensation of carbamoyl phosphate and aspartate to form carbamoyl aspartate and inorganic phosphate, the committed step in the de novo pyrimidine nucleotide biosynthesis pathway. The polypeptide is Aspartate carbamoyltransferase catalytic subunit (Campylobacter jejuni subsp. jejuni serotype O:6 (strain 81116 / NCTC 11828)).